The primary structure comprises 426 residues: Glutamate-1-semialdehyde 2,1-aminomutase (426 aa).

N6-(pyridoxal phosphate)lysine is present on Lys265.

Belongs to the class-III pyridoxal-phosphate-dependent aminotransferase family. HemL subfamily. In terms of assembly, homodimer. Pyridoxal 5'-phosphate serves as cofactor.

It localises to the cytoplasm. It catalyses the reaction (S)-4-amino-5-oxopentanoate = 5-aminolevulinate. The protein operates within porphyrin-containing compound metabolism; protoporphyrin-IX biosynthesis; 5-aminolevulinate from L-glutamyl-tRNA(Glu): step 2/2. The sequence is that of Glutamate-1-semialdehyde 2,1-aminomutase from Pectobacterium atrosepticum (strain SCRI 1043 / ATCC BAA-672) (Erwinia carotovora subsp. atroseptica).